The following is a 968-amino-acid chain: Sorting nexin-13 (968 aa).

Positions 97-284 (ANIIDEPLQQ…YVIWMIRDSN (188 aa)) constitute a PXA domain. An RGS domain is found at 373 to 496 (PLDSILVDNV…RKVYELMLRD (124 aa)). The PX domain occupies 570–691 (YADYDPYAVA…DFLENKAYSK (122 aa)). A 1,2-diacyl-sn-glycero-3-phospho-(1D-myo-inositol-3-phosphate) contacts are provided by arginine 612, serine 614, lysine 639, and arginine 653.

The protein belongs to the sorting nexin family.

It is found in the early endosome membrane. In terms of biological role, may be involved in several stages of intracellular trafficking. May play a role in endosome homeostasis. Acts as a GAP for Galphas. The chain is Sorting nexin-13 (SNX13) from Homo sapiens (Human).